We begin with the raw amino-acid sequence, 445 residues long: Exodeoxyribonuclease 7 large subunit (445 aa).

Belongs to the XseA family. In terms of assembly, heterooligomer composed of large and small subunits.

It localises to the cytoplasm. It catalyses the reaction Exonucleolytic cleavage in either 5'- to 3'- or 3'- to 5'-direction to yield nucleoside 5'-phosphates.. Bidirectionally degrades single-stranded DNA into large acid-insoluble oligonucleotides, which are then degraded further into small acid-soluble oligonucleotides. The protein is Exodeoxyribonuclease 7 large subunit of Xanthomonas euvesicatoria pv. vesicatoria (strain 85-10) (Xanthomonas campestris pv. vesicatoria).